The chain runs to 262 residues: Ribosome-recycling factor, mitochondrial (262 aa).

Residues 1–55 constitute a mitochondrion transit peptide; that stretch reads MASGIRCFRLLHPAFRSYHAALTRPVSEVSMKTVSGRQHGHRQYSAYPAVPVRHF.

Belongs to the RRF family.

Its subcellular location is the mitochondrion. Its function is as follows. Responsible for the disassembly of ribosomes from messenger RNA at the termination of mitochondrial protein biosynthesis. Acts in collaboration with GFM2. Promotes mitochondrial ribosome recycling by dissolution of intersubunit contacts. This is Ribosome-recycling factor, mitochondrial (Mrrf) from Mus musculus (Mouse).